The following is a 285-amino-acid chain: Dihydropteroate synthase (285 aa).

Residues 18–276 (PKIMGIVNLT…DVKATADALK (259 aa)) form the Pterin-binding domain. Residue Asn-25 participates in Mg(2+) binding. (7,8-dihydropterin-6-yl)methyl diphosphate is bound by residues Thr-66, Asp-99, Asn-119, Asp-190, Lys-229, and 264–266 (RVH).

Belongs to the DHPS family. In terms of assembly, homodimer. It depends on Mg(2+) as a cofactor.

It catalyses the reaction (7,8-dihydropterin-6-yl)methyl diphosphate + 4-aminobenzoate = 7,8-dihydropteroate + diphosphate. The protein operates within cofactor biosynthesis; tetrahydrofolate biosynthesis; 7,8-dihydrofolate from 2-amino-4-hydroxy-6-hydroxymethyl-7,8-dihydropteridine diphosphate and 4-aminobenzoate: step 1/2. Functionally, catalyzes the condensation of para-aminobenzoate (pABA) with 6-hydroxymethyl-7,8-dihydropterin diphosphate (DHPt-PP) to form 7,8-dihydropteroate (H2Pte), the immediate precursor of folate derivatives. The sequence is that of Dihydropteroate synthase (folP) from Neisseria meningitidis serogroup B (strain ATCC BAA-335 / MC58).